We begin with the raw amino-acid sequence, 845 residues long: Krueppel homolog 1 (845 aa).

Residues 141–164 (QKQQQQQQHESITNAAPTAAPSAQ) are disordered. 8 consecutive C2H2-type zinc fingers follow at residues 194-216 (FKCD…TKSH), 271-293 (YQCN…YRTH), 299-321 (FECE…RRIH), 327-349 (YKCD…MRIH), 355-377 (HKCS…MRTH), 383-407 (YKCP…SRTH), 413-435 (YHCD…RVQH), and 441-463 (YKCT…IKGH). Disordered stretches follow at residues 469 to 610 (DDEA…VQGQ) and 757 to 845 (GLRS…AKAS). 3 stretches are compositionally biased toward low complexity: residues 474–491 (AAAA…SAGS), 498–508 (SSNSESSNHSP), and 532–559 (ATLS…SSMA). Residues 582 to 591 (SGVSSAQPAH) are compositionally biased toward polar residues. The segment covering 759–775 (RSSTESPERSSSPESDS) has biased composition (low complexity). Over residues 796–809 (NKGDDGQVDSEKAS) the composition is skewed to basic and acidic residues. Residues 810-823 (GDGTSAAGGAASVG) show a composition bias toward low complexity.

Belongs to the krueppel C2H2-type zinc-finger protein family.

Functionally, plays a general role in the hierarchies of gene expression leading to metamorphosis. The chain is Krueppel homolog 1 (Kr-h1) from Drosophila melanogaster (Fruit fly).